The sequence spans 294 residues: Elongation factor Ts (294 aa).

The segment at Thr79–Val82 is involved in Mg(2+) ion dislocation from EF-Tu.

It belongs to the EF-Ts family.

It is found in the cytoplasm. Its function is as follows. Associates with the EF-Tu.GDP complex and induces the exchange of GDP to GTP. It remains bound to the aminoacyl-tRNA.EF-Tu.GTP complex up to the GTP hydrolysis stage on the ribosome. The sequence is that of Elongation factor Ts (tsf) from Geobacillus kaustophilus (strain HTA426).